The chain runs to 396 residues: Proteasome-activating nucleotidase (396 aa).

Positions 16–57 (ITYLKRRIRQLELQVRMLEADKERLERELSRLRSEMSRLRQP) form a coiled coil. ATP-binding positions include 181 to 186 (GCGKTL) and histidine 320. Residues 394 to 396 (IYG) are docks into pockets in the proteasome alpha-ring to cause gate opening.

The protein belongs to the AAA ATPase family. As to quaternary structure, homohexamer. The hexameric complex has a two-ring architecture resembling a top hat that caps the 20S proteasome core at one or both ends. Upon ATP-binding, the C-terminus of PAN interacts with the alpha-rings of the proteasome core by binding to the intersubunit pockets.

The protein resides in the cytoplasm. In terms of biological role, ATPase which is responsible for recognizing, binding, unfolding and translocation of substrate proteins into the archaeal 20S proteasome core particle. Is essential for opening the gate of the 20S proteasome via an interaction with its C-terminus, thereby allowing substrate entry and access to the site of proteolysis. Thus, the C-termini of the proteasomal ATPase function like a 'key in a lock' to induce gate opening and therefore regulate proteolysis. Unfolding activity requires energy from ATP hydrolysis, whereas ATP binding alone promotes ATPase-20S proteasome association which triggers gate opening, and supports translocation of unfolded substrates. This is Proteasome-activating nucleotidase from Pyrococcus abyssi (strain GE5 / Orsay).